We begin with the raw amino-acid sequence, 104 residues long: Iron-sulfur cluster assembly protein CyaY (104 aa).

The protein belongs to the frataxin family.

Involved in iron-sulfur (Fe-S) cluster assembly. May act as a regulator of Fe-S biogenesis. The protein is Iron-sulfur cluster assembly protein CyaY of Tolumonas auensis (strain DSM 9187 / NBRC 110442 / TA 4).